The primary structure comprises 328 residues: Nickel import system permease protein NikB (328 aa).

Helical transmembrane passes span 11–31 (LMQM…LMKL), 104–124 (LLIS…LGII), 139–159 (VIST…LLFI), 170–190 (ILSQ…AYII), 229–249 (ILPI…GTVV), and 279–299 (VLFI…LTLL). One can recognise an ABC transmembrane type-1 domain in the interval 100–297 (APITLLISFS…IINTIADLLT (198 aa)).

It belongs to the binding-protein-dependent transport system permease family. OppBC subfamily. As to quaternary structure, the complex is composed of two ATP-binding proteins (NikD and NikE), two transmembrane proteins (NikB and NikC) and a solute-binding protein (NikA).

It is found in the cell membrane. Functionally, part of the ABC transporter complex NikABCDE (Opp2) involved in nickel import. Probably responsible for the translocation of the substrate across the membrane. This Staphylococcus aureus (strain Mu50 / ATCC 700699) protein is Nickel import system permease protein NikB.